We begin with the raw amino-acid sequence, 213 residues long: Cell division protein SepF (213 aa).

The interval 27–103 is disordered; that stretch reads VDAPAPRRAP…GSLRGSAPTR (77 aa). Basic and acidic residues-rich tracts occupy residues 35-51 and 72-90; these read APVE…RFAD and DEDR…DRPA.

Belongs to the SepF family. Homodimer. Interacts with FtsZ.

It is found in the cytoplasm. In terms of biological role, cell division protein that is part of the divisome complex and is recruited early to the Z-ring. Probably stimulates Z-ring formation, perhaps through the cross-linking of FtsZ protofilaments. Its function overlaps with FtsA. The chain is Cell division protein SepF from Mycobacteroides abscessus (strain ATCC 19977 / DSM 44196 / CCUG 20993 / CIP 104536 / JCM 13569 / NCTC 13031 / TMC 1543 / L948) (Mycobacterium abscessus).